The following is a 480-amino-acid chain: MEVAPEQPRWMAHPAVLNAQHPDSHHPGLAHNYMEPAQLLPPDEVDVFFNHLDSQGNPYYANPAHARARVSYSPAHARLTGGQMCRPHLLHSPGLPWLDGGKAALSAAAAHHHNPWTVSPFSKTPLHPSAAGGPGGPLSVYPGAGGGSGGGSGSSVASLTPTAAHSGSHLFGFPPTPPKEVSPDPSTTGAASPASSSAGGSAARGEDKDGVKYQVSLTESMKMESGSPLRPGLATMGTQPATHHPIPTYPSYVPAAAHDYSSGLFHPGGFLGGPASSFTPKQRSKARSCSEGRECVNCGATATPLWRRDGTGHYLCNACGLYHKMNGQNRPLIKPKRRLSAARRAGTCCANCQTTTTTLWRRNANGDPVCNACGLYYKLHNVNRPLTMKKEGIQTRNRKMSNKSKKSKKGAECFEELSKCMQEKSSPFSAAALAGHMAPVGHLPPFSHSGHILPTPTPIHPSSSLSFGHPHPSSMVTAMG.

Serine 73 carries the phosphoserine modification. The residue at position 86 (arginine 86) is an Asymmetric dimethylarginine. Positions 119–209 (SPFSKTPLHP…GSAARGEDKD (91 aa)) are disordered. Positions 143 to 153 (GAGGGSGGGSG) are enriched in gly residues. The span at 185-203 (PSTTGAASPASSSAGGSAA) shows a compositional bias: low complexity. Serine 192 carries the post-translational modification Phosphoserine. 2 consecutive GATA-type zinc fingers follow at residues 295 to 319 (CVNCGATATPLWRRDGTGHYLCNAC) and 349 to 373 (CANCQTTTTTLWRRNANGDPVCNAC). Residue lysine 389 forms a Glycyl lysine isopeptide (Lys-Gly) (interchain with G-Cter in SUMO2) linkage. The tract at residues 448–480 (HSGHILPTPTPIHPSSSLSFGHPHPSSMVTAMG) is disordered.

As to quaternary structure, interacts with BRD3. Interacts with AR and CCAR1. Interacts with MDFIC. As to expression, endothelial cells.

The protein resides in the nucleus. Transcriptional activator which regulates endothelin-1 gene expression in endothelial cells. Binds to the consensus sequence 5'-AGATAG-3'. This chain is Endothelial transcription factor GATA-2 (GATA2), found in Homo sapiens (Human).